We begin with the raw amino-acid sequence, 58 residues long: Ferredoxin-2 (58 aa).

4Fe-4S ferredoxin-type domains are found at residues 2–27 (IEVN…MNEE) and 30–58 (KAVV…IVRS). Residue Cys8 participates in [3Fe-4S] cluster binding. Cys11 is subject to Cysteine methyl disulfide. Residue Cys14 participates in [3Fe-4S] cluster binding. A disulfide bridge connects residues Cys18 and Cys42. Cys50 is a binding site for [3Fe-4S] cluster.

As to quaternary structure, homodimer (ferredoxin I) or homotetramer (ferredoxin II). [3Fe-4S] cluster is required as a cofactor. It depends on [4Fe-4S] cluster as a cofactor.

In terms of biological role, ferredoxins are iron-sulfur proteins that transfer electrons in a wide variety of metabolic reactions. This Megalodesulfovibrio gigas (Desulfovibrio gigas) protein is Ferredoxin-2.